We begin with the raw amino-acid sequence, 501 residues long: MTQAILQLSEIEKAFPGVKALDKASLNVYPGRVMALMGENGAGKSTLMKVLTGIYHMDAGSIQYQGQPAAFKGPRDSQEAGISIIHQELNLIPELTIAENIFLGREFTGSMGRIQWSKMYAEADRLLQRLNVKHSSKTLLGDLSLGEQQMVEIAKALSFESKVIIMDEPTDALTDTETESLFKVINELREQGCGIVYISHRLKEIFEICDDITVLRDGKFIGECRVADTDEDGLIEMMVGRKLEEQYPRIDVKHGETCLEVVGLTGSGVHDVSFTLKRGEILGISGLMGAGRTELMKVIYGALPSEHGVINLDNKTINPVSPQDGLANGIAYISEDRKGDGLVLGLSVKENMSLCALDKLTKGVQIQHGEEVIAVEDFIKLFNIKTPTRDQIIGNLSGGNQQKVAIAKGLMTKPKVLILDEPTRGVDVGAKKEIYQLINKFKADGMSIILVSSEMPEVLGMSDRILVMHEGRITGEFDAKDADQEKLLACAVGKKINEEAA.

2 consecutive ABC transporter domains span residues 6-242 and 253-495; these read LQLS…VGRK and KHGE…VGKK. Residue 38–45 participates in ATP binding; the sequence is GENGAGKS.

It belongs to the ABC transporter superfamily. Ribose importer (TC 3.A.1.2.1) family. In terms of assembly, the complex is composed of an ATP-binding protein (RbsA), two transmembrane proteins (RbsC) and a solute-binding protein (RbsB).

The protein resides in the cell inner membrane. It carries out the reaction D-ribose(out) + ATP + H2O = D-ribose(in) + ADP + phosphate + H(+). Its function is as follows. Part of the ABC transporter complex RbsABC involved in ribose import. Responsible for energy coupling to the transport system. The sequence is that of Ribose import ATP-binding protein RbsA from Vibrio parahaemolyticus serotype O3:K6 (strain RIMD 2210633).